The sequence spans 193 residues: Ribonuclease HII (193 aa).

An RNase H type-2 domain is found at 15–193; it reads CIVAGIDEAG…PYHRRSFRCC (179 aa). A divalent metal cation is bound by residues D21, E22, and D112.

Belongs to the RNase HII family. It depends on Mn(2+) as a cofactor. The cofactor is Mg(2+).

Its subcellular location is the cytoplasm. It catalyses the reaction Endonucleolytic cleavage to 5'-phosphomonoester.. In terms of biological role, endonuclease that specifically degrades the RNA of RNA-DNA hybrids. This chain is Ribonuclease HII, found in Rickettsia rickettsii (strain Iowa).